Here is a 269-residue protein sequence, read N- to C-terminus: Shikimate dehydrogenase (NADP(+)) (269 aa).

Residues 14 to 16 and Thr61 contribute to the shikimate site; that span reads SKS. The Proton acceptor role is filled by Lys65. Position 77 (Glu77) interacts with NADP(+). Residues Asn86 and Asp102 each coordinate shikimate. NADP(+) is bound by residues 126–130, 150–155, and Met213; these read GAGGA and NRTYEK. Tyr215 contributes to the shikimate binding site. Gly237 contributes to the NADP(+) binding site.

It belongs to the shikimate dehydrogenase family. In terms of assembly, homodimer.

It carries out the reaction shikimate + NADP(+) = 3-dehydroshikimate + NADPH + H(+). It participates in metabolic intermediate biosynthesis; chorismate biosynthesis; chorismate from D-erythrose 4-phosphate and phosphoenolpyruvate: step 4/7. In terms of biological role, involved in the biosynthesis of the chorismate, which leads to the biosynthesis of aromatic amino acids. Catalyzes the reversible NADPH linked reduction of 3-dehydroshikimate (DHSA) to yield shikimate (SA). This is Shikimate dehydrogenase (NADP(+)) from Aliivibrio fischeri (strain ATCC 700601 / ES114) (Vibrio fischeri).